Reading from the N-terminus, the 337-residue chain is Cysteine synthase 3 (337 aa).

N6-(pyridoxal phosphate)lysine is present on K47. Residues N78, 182–186 (GSSGT), and S270 contribute to the pyridoxal 5'-phosphate site.

This sequence belongs to the cysteine synthase/cystathionine beta-synthase family. In terms of assembly, homodimer. The cofactor is pyridoxal 5'-phosphate.

The enzyme catalyses O-acetyl-L-serine + hydrogen sulfide = L-cysteine + acetate. The protein operates within amino-acid biosynthesis; L-cysteine biosynthesis; L-cysteine from L-serine: step 2/2. Its function is as follows. Primarily catalyzes the formation of cysteine and acetate from O-acetylserine and hydrogen sulfide. Can also catalyze the formation of cysteine and acetate from S-sulfocysteine and hydrogen sulfide and the formation of cyanoalanine and hydrogen sulfide from either S-sulfocysteine or O-acetylserine and hydrogen cyanide. The chain is Cysteine synthase 3 from Caenorhabditis elegans.